Here is a 388-residue protein sequence, read N- to C-terminus: Methylthioribose-1-phosphate isomerase (388 aa).

The active-site Proton donor is the D252.

Belongs to the eIF-2B alpha/beta/delta subunits family. MtnA subfamily.

The protein localises to the cytoplasm. The protein resides in the nucleus. It catalyses the reaction 5-(methylsulfanyl)-alpha-D-ribose 1-phosphate = 5-(methylsulfanyl)-D-ribulose 1-phosphate. Its pathway is amino-acid biosynthesis; L-methionine biosynthesis via salvage pathway; L-methionine from S-methyl-5-thio-alpha-D-ribose 1-phosphate: step 1/6. Catalyzes the interconversion of methylthioribose-1-phosphate (MTR-1-P) into methylthioribulose-1-phosphate (MTRu-1-P). This Verticillium alfalfae (strain VaMs.102 / ATCC MYA-4576 / FGSC 10136) (Verticillium wilt of alfalfa) protein is Methylthioribose-1-phosphate isomerase.